A 785-amino-acid chain; its full sequence is Terminal nucleotidyltransferase 4A (785 aa).

Residues 56–184 form a disordered region; sequence AAGRAAPAAG…QFHPGRRKRE (129 aa). Pro residues predominate over residues 68-85; it reads GPAPAASSPPPAPGPAAL. Composition is skewed to low complexity over residues 86 to 98 and 106 to 145; these read PPAL…PAAD and SPSL…AGSG. Mg(2+) contacts are provided by D290 and D292. Residues G353, K378, S396, and Y397 each coordinate ATP. Residues 421 to 480 form the PAP-associated domain; that stretch reads NLGMLLVEFFELYGRNFNYLKTGIRIKEGGAYIAKEEIMKAMTSGYRPSMLCIEDPLLPG. Positions 481 and 485 each coordinate ATP. Residues 593 to 611 are compositionally biased toward low complexity; sequence PQLLSSGSSASSVSSLSGS. 2 disordered regions span residues 593-625 and 731-785; these read PQLL…TPSV and KGSH…SLSR. The span at 757-774 shows a compositional bias: basic residues; that stretch reads RGHHQYNRTGWRRKKHAH.

It belongs to the DNA polymerase type-B-like family. In terms of assembly, component of a nuclear TRAMP-like complex, an ATP-dependent exosome regulatory complex consisting of a helicase (MTREX), an oligadenylate polymerase (TENT4B or TENT4A), and a substrate specific RNA-binding factor (ZCCHC7 or ZCCHC8). Several TRAMP-like complexes exist with specific compositions and are associated with nuclear, or nucleolar RNA exosomes. Mg(2+) is required as a cofactor. The cofactor is Mn(2+).

The protein resides in the cytoplasm. It is found in the nucleus. It localises to the nucleoplasm. It carries out the reaction RNA(n) + ATP = RNA(n)-3'-adenine ribonucleotide + diphosphate. Its function is as follows. Terminal nucleotidyltransferase that catalyzes preferentially the transfer of ATP and GTP on RNA 3' poly(A) tail creating a heterogeneous 3' poly(A) tail leading to mRNAs stabilization by protecting mRNAs from active deadenylation. Also functions as a catalytic subunit of a TRAMP-like complex which has a poly(A) RNA polymerase activity and is involved in a post-transcriptional quality control mechanism. Polyadenylation with short oligo(A) tails is required for the degradative activity of the exosome on several of its nuclear RNA substrates. Has no terminal uridylyltransferase activity, and does not play a role in replication-dependent histone mRNA degradation via uridylation. The polypeptide is Terminal nucleotidyltransferase 4A (Mus musculus (Mouse)).